Reading from the N-terminus, the 339-residue chain is FR-33289 synthase (339 aa).

The Fe(2+) site is built by His150, Asp152, and His288.

Belongs to the TfdA dioxygenase family. Homodimer. Fe(2+) serves as cofactor.

The enzyme catalyses 3-(N-acetyl-N-hydroxy)aminopropylphosphonate + 2-oxoglutarate + O2 = (R)-(3-(acetylhydroxyamino)-2-hydroxypropyl)phosphonate + succinate + CO2. The protein operates within antibiotic biosynthesis. Functionally, monooxygenase involved in the biosynthesis of the phosphonate antibiotic FR-33289, an antimalarial agent. Catalyzes the oxidative decarboxylation of the antibiotic FR-900098 (3-(N-acetyl-N-hydroxy)aminopropylphosphonate) to form FR-33289 ((R)-(3-(acetylhydroxyamino)-2-hydroxypropyl)phosphonate). This Streptomyces rubellomurinus (strain ATCC 31215) protein is FR-33289 synthase.